The chain runs to 336 residues: Fructose-1,6-bisphosphatase class 1 (336 aa).

Residues Glu-90, Asp-112, Leu-114, and Asp-115 each coordinate Mg(2+). Substrate contacts are provided by residues 115–118, Asn-211, and Lys-277; that span reads DGSS. Glu-283 provides a ligand contact to Mg(2+).

This sequence belongs to the FBPase class 1 family. Homotetramer. It depends on Mg(2+) as a cofactor.

The protein resides in the cytoplasm. It carries out the reaction beta-D-fructose 1,6-bisphosphate + H2O = beta-D-fructose 6-phosphate + phosphate. It functions in the pathway carbohydrate biosynthesis; gluconeogenesis. This chain is Fructose-1,6-bisphosphatase class 1, found in Pseudomonas putida (strain W619).